An 87-amino-acid polypeptide reads, in one-letter code: Putative regulatory protein ABC2323 (87 aa).

The protein belongs to the RemA family.

This chain is Putative regulatory protein ABC2323, found in Shouchella clausii (strain KSM-K16) (Alkalihalobacillus clausii).